Consider the following 116-residue polypeptide: Protein Rev (116 aa).

A phosphoserine; by host CK2 mark is found at serine 5 and serine 8. The tract at residues leucine 18–asparagine 26 is homomultimerization. A disordered region spans residues tyrosine 23–arginine 48. Residues threonine 34–arginine 50 carry the Nuclear localization signal and RNA-binding (RRE) motif. Residues glutamine 36–arginine 48 are compositionally biased toward basic residues. Positions leucine 73–aspartate 84 match the Nuclear export signal and binding to XPO1 motif. Residues glycine 90–glutamate 116 form a disordered region. 2 positions are modified to phosphoserine; by host: serine 92 and serine 99.

This sequence belongs to the HIV-1 REV protein family. In terms of assembly, homomultimer; when bound to the RRE. Multimeric assembly is essential for activity and may involve XPO1. Binds to human KPNB1, XPO1, TNPO1, RANBP5 and IPO7. Interacts with the viral Integrase. Interacts with human KHDRBS1. Interacts with human NAP1; this interaction decreases Rev multimerization and stimulates its activity. Interacts with human DEAD-box helicases DDX3 and DDX24; these interactions may serve for viral RNA export to the cytoplasm and packaging, respectively. Interacts with human PSIP1; this interaction may inhibit HIV-1 DNA integration by promoting dissociation of the Integrase-LEDGF/p75 complex. Post-translationally, asymmetrically arginine dimethylated at one site by host PRMT6. Methylation impairs the RNA-binding activity and export of viral RNA from the nucleus to the cytoplasm. In terms of processing, phosphorylated by protein kinase CK2. Presence of, and maybe binding to the N-terminus of the regulatory beta subunit of CK2 is necessary for CK2-mediated Rev's phosphorylation.

It is found in the host nucleus. The protein resides in the host nucleolus. It localises to the host cytoplasm. Its function is as follows. Escorts unspliced or incompletely spliced viral pre-mRNAs (late transcripts) out of the nucleus of infected cells. These pre-mRNAs carry a recognition sequence called Rev responsive element (RRE) located in the env gene, that is not present in fully spliced viral mRNAs (early transcripts). This function is essential since most viral proteins are translated from unspliced or partially spliced pre-mRNAs which cannot exit the nucleus by the pathway used by fully processed cellular mRNAs. Rev itself is translated from a fully spliced mRNA that readily exits the nucleus. Rev's nuclear localization signal (NLS) binds directly to KPNB1/Importin beta-1 without previous binding to KPNA1/Importin alpha-1. KPNB1 binds to the GDP bound form of RAN (Ran-GDP) and targets Rev to the nucleus. In the nucleus, the conversion from Ran-GDP to Ran-GTP dissociates Rev from KPNB1 and allows Rev's binding to the RRE in viral pre-mRNAs. Rev multimerization on the RRE via cooperative assembly exposes its nuclear export signal (NES) to the surface. Rev can then form a complex with XPO1/CRM1 and Ran-GTP, leading to nuclear export of the complex. Conversion from Ran-GTP to Ran-GDP mediates dissociation of the Rev/RRE/XPO1/RAN complex, so that Rev can return to the nucleus for a subsequent round of export. Beside KPNB1, also seems to interact with TNPO1/Transportin-1, RANBP5/IPO5 and IPO7/RANBP7 for nuclear import. The nucleoporin-like HRB/RIP is an essential cofactor that probably indirectly interacts with Rev to release HIV RNAs from the perinuclear region to the cytoplasm. The sequence is that of Protein Rev from Human immunodeficiency virus type 1 group M subtype B (isolate OYI) (HIV-1).